The chain runs to 651 residues: Acetyl-coenzyme A synthetase (651 aa).

CoA-binding positions include 189–192 (RGGK), T311, and N335. ATP contacts are provided by residues 387-389 (GEP), 411-416 (DTWWQT), D500, and R515. CoA is bound at residue S523. R526 contributes to the ATP binding site. Mg(2+) is bound by residues V537, H539, and V542. R584 is a CoA binding site. K609 carries the N6-acetyllysine modification.

It belongs to the ATP-dependent AMP-binding enzyme family. Mg(2+) is required as a cofactor. Post-translationally, acetylated. Deacetylation by the SIR2-homolog deacetylase activates the enzyme.

The catalysed reaction is acetate + ATP + CoA = acetyl-CoA + AMP + diphosphate. Its function is as follows. Catalyzes the conversion of acetate into acetyl-CoA (AcCoA), an essential intermediate at the junction of anabolic and catabolic pathways. AcsA undergoes a two-step reaction. In the first half reaction, AcsA combines acetate with ATP to form acetyl-adenylate (AcAMP) intermediate. In the second half reaction, it can then transfer the acetyl group from AcAMP to the sulfhydryl group of CoA, forming the product AcCoA. In Rhizobium leguminosarum bv. trifolii (strain WSM2304), this protein is Acetyl-coenzyme A synthetase.